Consider the following 198-residue polypeptide: Glycerol-3-phosphate acyltransferase (198 aa).

Transmembrane regions (helical) follow at residues Leu-4–Ile-24, Ser-53–Phe-75, Pro-80–Phe-102, Leu-112–Val-132, and Val-134–Phe-154.

The protein belongs to the PlsY family. Probably interacts with PlsX.

Its subcellular location is the cell inner membrane. It carries out the reaction an acyl phosphate + sn-glycerol 3-phosphate = a 1-acyl-sn-glycero-3-phosphate + phosphate. It participates in lipid metabolism; phospholipid metabolism. Its function is as follows. Catalyzes the transfer of an acyl group from acyl-phosphate (acyl-PO(4)) to glycerol-3-phosphate (G3P) to form lysophosphatidic acid (LPA). This enzyme utilizes acyl-phosphate as fatty acyl donor, but not acyl-CoA or acyl-ACP. The chain is Glycerol-3-phosphate acyltransferase from Aliivibrio fischeri (strain ATCC 700601 / ES114) (Vibrio fischeri).